Here is a 747-residue protein sequence, read N- to C-terminus: Cysteine--tRNA ligase, cytoplasmic (747 aa).

The interval 1-26 (MTESWEQGKGRRTQPPWSAPNTNEQP) is disordered. A compositionally biased stretch (polar residues) spans 15–25 (PPWSAPNTNEQ). Position 54 (cysteine 54) interacts with Zn(2+). Glycine 55 serves as a coordination point for L-cysteine. The 'HIGH' region signature appears at 56–66 (PTVYDASHMGH). Threonine 95 lines the L-cysteine pocket. The 'KIIK' region motif lies at 100–103 (KIIK). Zn(2+) is bound by residues cysteine 347, histidine 372, and glutamate 376. Histidine 372 contacts L-cysteine. Positions 405-409 (KMSKS) match the 'KMSKS' region motif. Lysine 408 is an ATP binding site. The segment covering 651–683 (EEKRKAEEEKQRKKEEAARKKQQQEAAKLEKMK) has biased composition (basic and acidic residues). 2 disordered regions span residues 651-685 (EEKRKAEEEKQRKKEEAARKKQQQEAAKLEKMKIS) and 700-721 (FDESGFPTHDTEGKELSKGQTK).

The protein belongs to the class-I aminoacyl-tRNA synthetase family. Homodimer. It depends on Zn(2+) as a cofactor.

Its subcellular location is the cytoplasm. The catalysed reaction is tRNA(Cys) + L-cysteine + ATP = L-cysteinyl-tRNA(Cys) + AMP + diphosphate. Functionally, catalyzes the ATP-dependent ligation of cysteine to tRNA(Cys). The sequence is that of Cysteine--tRNA ligase, cytoplasmic (cars1) from Xenopus laevis (African clawed frog).